The following is a 685-amino-acid chain: E3 ubiquitin-protein ligase RNF6 (685 aa).

Composition is skewed to basic and acidic residues over residues 1 to 10, 17 to 29, and 88 to 107; these read MNQSRSRSDG, PQDH…ERRW, and DLRD…SSHE. Disordered regions lie at residues 1–29, 81–107, 121–142, 168–273, 286–345, and 499–576; these read MNQS…ERRW, EQLA…SSHE, GNAT…RTNP, DYTD…REGQ, RSNV…RRRG, and EADS…NPNN. Composition is skewed to polar residues over residues 199–213, 250–264, and 286–297; these read SQTS…SNIP, ASRT…QSGG, and RSNVTVRNTNQR. Low complexity predominate over residues 303–313; the sequence is LRSTSNSRSRS. 2 stretches are compositionally biased toward polar residues: residues 314 to 325 and 519 to 528; these read PIQRQSGTVYHN and ELSNLGTDNN. Residues 632 to 673 form an RING-type zinc finger; it reads CSVCISDYVTGNKLRQLPCMHEFHIHCIDRWLSENCTCPICR.

The protein belongs to the RNF12 family. Weakly expressed in peripheral blood, spleen, prostate, testis and ovary. According to a report, it is preferentially expressed in testis and ovary and hardly detected in other tissues.

It localises to the nucleus. The protein resides in the cytoplasm. It is found in the cell projection. Its subcellular location is the axon. The protein localises to the PML body. It catalyses the reaction S-ubiquitinyl-[E2 ubiquitin-conjugating enzyme]-L-cysteine + [acceptor protein]-L-lysine = [E2 ubiquitin-conjugating enzyme]-L-cysteine + N(6)-ubiquitinyl-[acceptor protein]-L-lysine.. The protein operates within protein modification; protein ubiquitination. Its function is as follows. E3 ubiquitin-protein ligase mediating 'Lys-48'-linked polyubiquitination of LIMK1 and its subsequent targeting to the proteasome for degradation. Negatively regulates axonal outgrowth through regulation of the LIMK1 turnover. Mediates 'Lys-6' and 'Lys-27'-linked polyubiquitination of AR/androgen receptor thereby modulating its transcriptional activity. May also bind DNA and function as a transcriptional regulator. Mediates polyubiquitination of QKI in macrophages, leading to its degradation. This Homo sapiens (Human) protein is E3 ubiquitin-protein ligase RNF6.